The primary structure comprises 144 residues: Methylglyoxal synthase (144 aa).

The MGS-like domain maps to 1-144 (MKIALIAHDE…KSGEEKETER (144 aa)). Residues histidine 8, lysine 12, 34–37 (TGTT), and 54–55 (SG) contribute to the substrate site. Aspartate 60 serves as the catalytic Proton donor/acceptor. Histidine 87 is a binding site for substrate.

The protein belongs to the methylglyoxal synthase family.

It catalyses the reaction dihydroxyacetone phosphate = methylglyoxal + phosphate. Catalyzes the formation of methylglyoxal from dihydroxyacetone phosphate. The sequence is that of Methylglyoxal synthase from Geobacillus thermodenitrificans (strain NG80-2).